Consider the following 243-residue polypeptide: Triosephosphate isomerase (243 aa).

9–11 (NWK) lines the substrate pocket. His-96 serves as the catalytic Electrophile. The active-site Proton acceptor is the Glu-165. Substrate-binding positions include Gly-171, Ser-204, and 225–226 (GG).

This sequence belongs to the triosephosphate isomerase family. Homodimer.

Its subcellular location is the cytoplasm. It catalyses the reaction D-glyceraldehyde 3-phosphate = dihydroxyacetone phosphate. Its pathway is carbohydrate biosynthesis; gluconeogenesis. It functions in the pathway carbohydrate degradation; glycolysis; D-glyceraldehyde 3-phosphate from glycerone phosphate: step 1/1. Involved in the gluconeogenesis. Catalyzes stereospecifically the conversion of dihydroxyacetone phosphate (DHAP) to D-glyceraldehyde-3-phosphate (G3P). The protein is Triosephosphate isomerase of Synechococcus sp. (strain CC9311).